The primary structure comprises 132 residues: Transcriptional regulator MraZ (132 aa).

SpoVT-AbrB domains lie at threonine 5–aspartate 47 and threonine 76–lysine 119.

It belongs to the MraZ family. As to quaternary structure, forms oligomers.

It is found in the cytoplasm. The protein resides in the nucleoid. The protein is Transcriptional regulator MraZ of Mycoplasma capricolum subsp. capricolum (strain California kid / ATCC 27343 / NCTC 10154).